The following is a 1049-amino-acid chain: Carbamoyl phosphate synthase large chain (1049 aa).

A carboxyphosphate synthetic domain region spans residues 1–399 (MRESVRKVLV…SLQKAVRMLD (399 aa)). Residues Arg127, Arg167, Gly173, Gly174, Lys206, Leu208, Glu213, Gly239, Val240, His241, Gln282, and Glu296 each contribute to the ATP site. Residues 131-325 (RETMINVGLP…LAYVSAKLAL (195 aa)) form the ATP-grasp 1 domain. Positions 282, 296, and 298 each coordinate Mg(2+). Mn(2+) is bound by residues Gln282, Glu296, and Asn298. An oligomerization domain region spans residues 400–548 (IGEPGVVGGK…LTYNGTEDDI (149 aa)). Residues 549–930 (EFSEAGNKLL…LKSWLSSSPN (382 aa)) form a carbamoyl phosphate synthetic domain region. Residues 674 to 864 (SKLLDKLGIK…IISLALDGIL (191 aa)) form the ATP-grasp 2 domain. ATP is bound by residues Arg710, Lys749, Leu751, Glu756, Gly780, Val781, His782, Ser783, Gln823, and Glu835. Mg(2+)-binding residues include Gln823, Glu835, and Asn837. Residues Gln823, Glu835, and Asn837 each contribute to the Mn(2+) site. The MGS-like domain occupies 930–1049 (NKIPNKEGIA…YEISEYGAGI (120 aa)). Residues 931–1049 (KIPNKEGIAL…YEISEYGAGI (119 aa)) are allosteric domain.

This sequence belongs to the CarB family. In terms of assembly, composed of two chains; the small (or glutamine) chain promotes the hydrolysis of glutamine to ammonia, which is used by the large (or ammonia) chain to synthesize carbamoyl phosphate. Tetramer of heterodimers (alpha,beta)4. Requires Mg(2+) as cofactor. It depends on Mn(2+) as a cofactor.

It carries out the reaction hydrogencarbonate + L-glutamine + 2 ATP + H2O = carbamoyl phosphate + L-glutamate + 2 ADP + phosphate + 2 H(+). The enzyme catalyses hydrogencarbonate + NH4(+) + 2 ATP = carbamoyl phosphate + 2 ADP + phosphate + 2 H(+). The protein operates within amino-acid biosynthesis; L-arginine biosynthesis; carbamoyl phosphate from bicarbonate: step 1/1. It participates in pyrimidine metabolism; UMP biosynthesis via de novo pathway; (S)-dihydroorotate from bicarbonate: step 1/3. Functionally, large subunit of the glutamine-dependent carbamoyl phosphate synthetase (CPSase). CPSase catalyzes the formation of carbamoyl phosphate from the ammonia moiety of glutamine, carbonate, and phosphate donated by ATP, constituting the first step of 2 biosynthetic pathways, one leading to arginine and/or urea and the other to pyrimidine nucleotides. The large subunit (synthetase) binds the substrates ammonia (free or transferred from glutamine from the small subunit), hydrogencarbonate and ATP and carries out an ATP-coupled ligase reaction, activating hydrogencarbonate by forming carboxy phosphate which reacts with ammonia to form carbamoyl phosphate. The protein is Carbamoyl phosphate synthase large chain of Sulfurisphaera tokodaii (strain DSM 16993 / JCM 10545 / NBRC 100140 / 7) (Sulfolobus tokodaii).